A 744-amino-acid polypeptide reads, in one-letter code: Catalase-peroxidase 3 (744 aa).

Residues 106–228 constitute a cross-link (tryptophyl-tyrosyl-methioninium (Trp-Tyr) (with M-254)); the sequence is WHFAGTYRIG…LAASEMGLIY (123 aa). H107 (proton acceptor) is an active-site residue. The tryptophyl-tyrosyl-methioninium (Tyr-Met) (with W-106) cross-link spans 228-254; sequence YVDPQGPATLPDPLASARDIRETFRRM. A heme b-binding site is contributed by H269.

It belongs to the peroxidase family. Peroxidase/catalase subfamily. As to quaternary structure, homodimer or homotetramer. Heme b is required as a cofactor. Formation of the three residue Trp-Tyr-Met cross-link is important for the catalase, but not the peroxidase activity of the enzyme.

It carries out the reaction H2O2 + AH2 = A + 2 H2O. The catalysed reaction is 2 H2O2 = O2 + 2 H2O. Functionally, bifunctional enzyme with both catalase and broad-spectrum peroxidase activity. The protein is Catalase-peroxidase 3 of Mycolicibacterium smegmatis (strain ATCC 700084 / mc(2)155) (Mycobacterium smegmatis).